A 332-amino-acid polypeptide reads, in one-letter code: Glyceraldehyde-3-phosphate dehydrogenase 3 (332 aa).

The NAD(+) site is built by arginine 11, isoleucine 12, and aspartate 33. Residues lysine 46 and lysine 63 each participate in a glycyl lysine isopeptide (Lys-Gly) (interchain with G-Cter in ubiquitin) cross-link. Threonine 120 is an NAD(+) binding site. 149–151 serves as a coordination point for D-glyceraldehyde 3-phosphate; the sequence is SCT. Cysteine 150 serves as the catalytic Nucleophile. A cysteine persulfide mark is found at cysteine 150 and cysteine 154. A Glycyl lysine isopeptide (Lys-Gly) (interchain with G-Cter in URM1) cross-link involves residue lysine 160. Residues threonine 180, 209–210, and arginine 232 each bind D-glyceraldehyde 3-phosphate; that span reads TG. Serine 302 is modified (phosphoserine). Residue lysine 307 forms a Glycyl lysine isopeptide (Lys-Gly) (interchain with G-Cter in URM1) linkage. 2 residues coordinate NAD(+): asparagine 314 and tyrosine 318.

Belongs to the glyceraldehyde-3-phosphate dehydrogenase family. In terms of assembly, homotetramer. In terms of processing, conjugated to URM1, a ubiquitin-like protein, in response to oxidative stresses. The attachment of URM1 to lysine residues exclusively depends on the presence of a peroxidatic cysteine in the target protein, with low specificity for the particular residue, motif, or structural context at which urmylation can occur. The URM1-conjugation reaction is mechanistically and directly coupled to the process of cysteine persulfidation, transfering the sulfur atom of the URM1 thiocarboxyl group to redox-active cysteine residues in the target protein if it is exposed to oxidative conditions. Persulfidated on specific redox-active cysteine residues. Persulfidation (also called protein S-sulfhydration) may provide a molecular mechanism that enables cells to protect vulnerable cysteine residues from reactive oxygen species (ROS) under stress conditions.

It localises to the cytoplasm. It is found in the mitochondrion. It carries out the reaction D-glyceraldehyde 3-phosphate + phosphate + NAD(+) = (2R)-3-phospho-glyceroyl phosphate + NADH + H(+). The enzyme catalyses NADH + H2O = (6R)-NADHX. It catalyses the reaction NADH + H2O = (6S)-NADHX. The catalysed reaction is NADPH + H2O = (6R)-NADPHX. It carries out the reaction NADPH + H2O = (6S)-NADPHX. The protein operates within carbohydrate degradation; glycolysis; pyruvate from D-glyceraldehyde 3-phosphate: step 1/5. Glyceraldehyde-3-phosphate dehydrogenase (GAPDH) involved in glycolysis and gluconeogenesis. Catalyzes the reaction of glyceraldehyde-3-phosphate to 1,3 bis-phosphoglycerate. The contribution of the TDH1, TDH2, and TDH3 to the total glyceraldehyde-3-phosphate dehydrogenase activity is 10-15, 25-30, and 50-60%, respectively. In terms of biological role, as a side activity, catalyzes the hydration of the nicotinamide ring of NADH or NADPH at the C6 position to give the corresponding hydrates, NADHX and NADPHX, which exist as R and S epimers, that cannot act as electron donors or acceptors and inhibit several dehydrogenases, making them toxic. The polypeptide is Glyceraldehyde-3-phosphate dehydrogenase 3 (Saccharomyces cerevisiae (strain ATCC 204508 / S288c) (Baker's yeast)).